We begin with the raw amino-acid sequence, 264 residues long: Thymidylate synthase (264 aa).

DUMP contacts are provided by residues R21 and 126-127 (RR). C146 functions as the Nucleophile in the catalytic mechanism. DUMP contacts are provided by residues 166–169 (RSAD), N177, and 207–209 (HLY). Residue D169 coordinates (6R)-5,10-methylene-5,6,7,8-tetrahydrofolate. (6R)-5,10-methylene-5,6,7,8-tetrahydrofolate is bound at residue A263.

The protein belongs to the thymidylate synthase family. Bacterial-type ThyA subfamily. As to quaternary structure, homodimer.

The protein localises to the cytoplasm. The enzyme catalyses dUMP + (6R)-5,10-methylene-5,6,7,8-tetrahydrofolate = 7,8-dihydrofolate + dTMP. Its pathway is pyrimidine metabolism; dTTP biosynthesis. Its function is as follows. Catalyzes the reductive methylation of 2'-deoxyuridine-5'-monophosphate (dUMP) to 2'-deoxythymidine-5'-monophosphate (dTMP) while utilizing 5,10-methylenetetrahydrofolate (mTHF) as the methyl donor and reductant in the reaction, yielding dihydrofolate (DHF) as a by-product. This enzymatic reaction provides an intracellular de novo source of dTMP, an essential precursor for DNA biosynthesis. This chain is Thymidylate synthase, found in Rhodopseudomonas palustris (strain ATCC BAA-98 / CGA009).